Reading from the N-terminus, the 355-residue chain is Small ribosomal subunit biogenesis GTPase RsgA 1 (355 aa).

The CP-type G domain occupies 103-262 (GRVADRQAIA…LIDTPGVREF (160 aa)). GTP contacts are provided by residues 152-155 (NKAD) and 204-212 (GSSGVGKSS). 4 residues coordinate Zn(2+): C285, C290, H292, and C298.

Belongs to the TRAFAC class YlqF/YawG GTPase family. RsgA subfamily. As to quaternary structure, monomer. Associates with 30S ribosomal subunit, binds 16S rRNA. Zn(2+) serves as cofactor.

It localises to the cytoplasm. Its function is as follows. One of several proteins that assist in the late maturation steps of the functional core of the 30S ribosomal subunit. Helps release RbfA from mature subunits. May play a role in the assembly of ribosomal proteins into the subunit. Circularly permuted GTPase that catalyzes slow GTP hydrolysis, GTPase activity is stimulated by the 30S ribosomal subunit. The polypeptide is Small ribosomal subunit biogenesis GTPase RsgA 1 (Bacteroides thetaiotaomicron (strain ATCC 29148 / DSM 2079 / JCM 5827 / CCUG 10774 / NCTC 10582 / VPI-5482 / E50)).